The primary structure comprises 692 residues: Centrosomal protein of 83 kDa (692 aa).

2 coiled-coil regions span residues 32-625 (RCEH…SLIL) and 656-689 (HLQE…ELGS). A Phosphoserine modification is found at Ser689.

The protein belongs to the CEP83 family. Interacts with CEP164 and IFT20.

It localises to the cytoplasm. The protein resides in the cytoskeleton. It is found in the microtubule organizing center. The protein localises to the centrosome. Its subcellular location is the centriole. Functionally, component of the distal appendage region of the centriole involved in the initiation of primary cilium assembly. May collaborate with IFT20 in the trafficking of ciliary membrane proteins from the Golgi complex to the cilium during the initiation of primary cilium assembly. The sequence is that of Centrosomal protein of 83 kDa (Cep83) from Mus musculus (Mouse).